We begin with the raw amino-acid sequence, 279 residues long: Thymidylate synthase (279 aa).

133–134 (RR) is a dUMP binding site. Cys-154 serves as the catalytic Nucleophile. Residues 178–181 (RSND), Asn-189, and 219–221 (HIY) contribute to the dUMP site. Asp-181 is a (6R)-5,10-methylene-5,6,7,8-tetrahydrofolate binding site. A (6R)-5,10-methylene-5,6,7,8-tetrahydrofolate-binding site is contributed by Ala-278.

It belongs to the thymidylate synthase family. Bacterial-type ThyA subfamily. Homodimer.

Its subcellular location is the cytoplasm. It catalyses the reaction dUMP + (6R)-5,10-methylene-5,6,7,8-tetrahydrofolate = 7,8-dihydrofolate + dTMP. It functions in the pathway pyrimidine metabolism; dTTP biosynthesis. Its function is as follows. Catalyzes the reductive methylation of 2'-deoxyuridine-5'-monophosphate (dUMP) to 2'-deoxythymidine-5'-monophosphate (dTMP) while utilizing 5,10-methylenetetrahydrofolate (mTHF) as the methyl donor and reductant in the reaction, yielding dihydrofolate (DHF) as a by-product. This enzymatic reaction provides an intracellular de novo source of dTMP, an essential precursor for DNA biosynthesis. The polypeptide is Thymidylate synthase (Streptococcus gordonii (strain Challis / ATCC 35105 / BCRC 15272 / CH1 / DL1 / V288)).